A 295-amino-acid polypeptide reads, in one-letter code: Nucleotide-binding protein YjiE (295 aa).

Position 12–19 (12–19 (GMSGAGKT)) interacts with ATP. Position 63–66 (63–66 (DMRS)) interacts with GTP.

Belongs to the RapZ-like family.

In terms of biological role, displays ATPase and GTPase activities. The chain is Nucleotide-binding protein YjiE (yjiE) from Lactococcus lactis subsp. lactis (strain IL1403) (Streptococcus lactis).